A 319-amino-acid chain; its full sequence is Oligopeptide transport system permease protein OppB (319 aa).

A run of 6 helical transmembrane segments spans residues 9–29, 99–119, 137–157, 183–203, 248–268, and 289–309; these read ILLM…FAKL, FWMS…MSIV, SITF…IFGY, IYHM…GIFT, FGFV…IFGY, and ALIL…DIIM. In terms of domain architecture, ABC transmembrane type-1 spans 95–305; the sequence is AINTFWMSLL…FLGLLGALLS (211 aa).

This sequence belongs to the binding-protein-dependent transport system permease family. OppBC subfamily. The complex is composed of two ATP-binding proteins (OppD and OppF), two transmembrane proteins (OppB and OppC) and a solute-binding protein (OppA).

It is found in the cell membrane. In terms of biological role, part of the ABC transporter complex OppABCDF involved in the uptake of oligopeptides. Probably responsible for the translocation of the substrate across the membrane. Essential for uptake of peptides larger than three amino acids and for growth in milk. This chain is Oligopeptide transport system permease protein OppB (oppB), found in Lactococcus lactis subsp. lactis (strain IL1403) (Streptococcus lactis).